Here is a 191-residue protein sequence, read N- to C-terminus: Peptidyl-tRNA hydrolase (191 aa).

Tyrosine 17 serves as a coordination point for tRNA. Histidine 22 functions as the Proton acceptor in the catalytic mechanism. Residues tyrosine 68, asparagine 70, and asparagine 116 each coordinate tRNA.

This sequence belongs to the PTH family. Monomer.

The protein resides in the cytoplasm. It catalyses the reaction an N-acyl-L-alpha-aminoacyl-tRNA + H2O = an N-acyl-L-amino acid + a tRNA + H(+). In terms of biological role, hydrolyzes ribosome-free peptidyl-tRNAs (with 1 or more amino acids incorporated), which drop off the ribosome during protein synthesis, or as a result of ribosome stalling. Its function is as follows. Catalyzes the release of premature peptidyl moieties from peptidyl-tRNA molecules trapped in stalled 50S ribosomal subunits, and thus maintains levels of free tRNAs and 50S ribosomes. The sequence is that of Peptidyl-tRNA hydrolase from Mycobacterium ulcerans (strain Agy99).